Here is a 171-residue protein sequence, read N- to C-terminus: Inosine/xanthosine triphosphatase (171 aa).

8 to 13 (TTNPAK) is a binding site for substrate. Residues Glu38 and Gln68 each coordinate Mg(2+).

Belongs to the YjjX NTPase family. As to quaternary structure, homodimer. Mg(2+) is required as a cofactor. The cofactor is Mn(2+).

The catalysed reaction is XTP + H2O = XDP + phosphate + H(+). It carries out the reaction ITP + H2O = IDP + phosphate + H(+). Functionally, phosphatase that hydrolyzes non-canonical purine nucleotides such as XTP and ITP to their respective diphosphate derivatives. Probably excludes non-canonical purines from DNA/RNA precursor pool, thus preventing their incorporation into DNA/RNA and avoiding chromosomal lesions. This chain is Inosine/xanthosine triphosphatase (yjjX), found in Salmonella typhimurium (strain LT2 / SGSC1412 / ATCC 700720).